The primary structure comprises 293 residues: Protease HtpX (293 aa).

A run of 2 helical transmembrane segments spans residues 4 to 24 (IALFLLTNLAVMVVFGLVLSL) and 34 to 54 (GLMIMALLFGFGGSFVSLLMS). His139 is a Zn(2+) binding site. Residue Glu140 is part of the active site. His143 lines the Zn(2+) pocket. The next 2 membrane-spanning stretches (helical) occupy residues 158 to 178 (VVNTFVIFISRILAQLAAGFM) and 193 to 213 (LIYFAVATVLELVFGILASII). Zn(2+) is bound at residue Glu222.

The protein belongs to the peptidase M48B family. Requires Zn(2+) as cofactor.

It is found in the cell inner membrane. This Escherichia coli O127:H6 (strain E2348/69 / EPEC) protein is Protease HtpX.